A 453-amino-acid polypeptide reads, in one-letter code: Probable exopolygalacturonase B (453 aa).

The first 16 residues, 1–16, serve as a signal peptide directing secretion; the sequence is MKFFALAALFASTVNS. Asn185 and Asn225 each carry an N-linked (GlcNAc...) asparagine glycan. Asp255 (proton donor) is an active-site residue. Cys257 and Cys274 are disulfide-bonded. 2 N-linked (GlcNAc...) asparagine glycosylation sites follow: Asn263 and Asn275. His278 is an active-site residue. 2 PbH1 repeats span residues 295–316 and 327–348; these read IENV…RLKA and INNV…VLDQ. 4 N-linked (GlcNAc...) asparagine glycosylation sites follow: Asn302, Asn329, Asn354, and Asn366. The stretch at 362–405 is one PbH1 3 repeat; that stretch reads PSRVNFTNIVFEDIYGTSSGKRGKVVADLTCSPNAVCSGIRLKN. A disulfide bond links Cys392 and Cys398. Residue Asn436 is glycosylated (N-linked (GlcNAc...) asparagine).

It belongs to the glycosyl hydrolase 28 family.

The protein resides in the secreted. It carries out the reaction [(1-&gt;4)-alpha-D-galacturonosyl](n) + H2O = alpha-D-galacturonate + [(1-&gt;4)-alpha-D-galacturonosyl](n-1). Specific in hydrolyzing the terminal glycosidic bond of polygalacturonic acid and oligogalacturonates. This is Probable exopolygalacturonase B (pgxB) from Aspergillus fumigatus (strain CBS 144.89 / FGSC A1163 / CEA10) (Neosartorya fumigata).